We begin with the raw amino-acid sequence, 514 residues long: 2,3-bisphosphoglycerate-independent phosphoglycerate mutase (514 aa).

The Mn(2+) site is built by Asp-14 and Ser-64. Residue Ser-64 is the Phosphoserine intermediate of the active site. Substrate contacts are provided by residues His-125, 155–156 (RD), Arg-187, Arg-193, 263–266 (RADR), and Lys-336. Mn(2+) contacts are provided by Asp-403, His-407, Asp-444, His-445, and His-463.

The protein belongs to the BPG-independent phosphoglycerate mutase family. In terms of assembly, monomer. The cofactor is Mn(2+).

It catalyses the reaction (2R)-2-phosphoglycerate = (2R)-3-phosphoglycerate. The protein operates within carbohydrate degradation; glycolysis; pyruvate from D-glyceraldehyde 3-phosphate: step 3/5. Its function is as follows. Catalyzes the interconversion of 2-phosphoglycerate and 3-phosphoglycerate. This chain is 2,3-bisphosphoglycerate-independent phosphoglycerate mutase, found in Shigella dysenteriae serotype 1 (strain Sd197).